The chain runs to 603 residues: Phosphomethylpyrimidine synthase (603 aa).

Substrate is bound by residues asparagine 224, methionine 253, tyrosine 282, histidine 318, 338-340 (SRG), 379-382 (DGLR), and glutamate 418. Histidine 422 lines the Zn(2+) pocket. Substrate is bound at residue tyrosine 445. Residue histidine 486 participates in Zn(2+) binding. Positions 566, 569, and 574 each coordinate [4Fe-4S] cluster.

This sequence belongs to the ThiC family. In terms of assembly, homodimer. Requires [4Fe-4S] cluster as cofactor.

It carries out the reaction 5-amino-1-(5-phospho-beta-D-ribosyl)imidazole + S-adenosyl-L-methionine = 4-amino-2-methyl-5-(phosphooxymethyl)pyrimidine + CO + 5'-deoxyadenosine + formate + L-methionine + 3 H(+). The protein operates within cofactor biosynthesis; thiamine diphosphate biosynthesis. Catalyzes the synthesis of the hydroxymethylpyrimidine phosphate (HMP-P) moiety of thiamine from aminoimidazole ribotide (AIR) in a radical S-adenosyl-L-methionine (SAM)-dependent reaction. This is Phosphomethylpyrimidine synthase from Xylella fastidiosa (strain Temecula1 / ATCC 700964).